We begin with the raw amino-acid sequence, 234 residues long: tRNA (guanine-N(1)-)-methyltransferase (234 aa).

S-adenosyl-L-methionine is bound by residues Gly112 and 132 to 137; that span reads IGDFIL.

This sequence belongs to the RNA methyltransferase TrmD family. In terms of assembly, homodimer.

The protein resides in the cytoplasm. It carries out the reaction guanosine(37) in tRNA + S-adenosyl-L-methionine = N(1)-methylguanosine(37) in tRNA + S-adenosyl-L-homocysteine + H(+). Specifically methylates guanosine-37 in various tRNAs. The chain is tRNA (guanine-N(1)-)-methyltransferase from Campylobacter jejuni (strain RM1221).